Reading from the N-terminus, the 407-residue chain is DAZ-associated protein 1 (407 aa).

An N-acetylmethionine modification is found at M1. 2 consecutive RRM domains span residues 10–97 (GKLF…RTRP) and 113–190 (NKIF…RAEP). The segment at 74–117 (TLDGRNIDPKPCTPRGMQPERTRPKEGWQKGPRSDNSKSNKIFV) is disordered. Positions 91–111 (QPERTRPKEGWQKGPRSDNSK) are enriched in basic and acidic residues. K150 is subject to N6-acetyllysine. A compositionally biased stretch (basic and acidic residues) spans 185-194 (VKRAEPRDSK). A disordered region spans residues 185–407 (VKRAEPRDSK…NVQGFHPYRR (223 aa)). Polar residues predominate over residues 195–207 (SQAPGQPGASQWG). The span at 247-262 (GPPPAGRGAPPPPPPF) shows a compositional bias: pro residues. R253 bears the Omega-N-methylarginine mark. Over residues 280 to 294 (FPQGYGAPPQFSFGY) the composition is skewed to low complexity. The segment covering 295-315 (GPPPPPPDQFAPPGVPPPPAT) has biased composition (pro residues). A compositionally biased stretch (low complexity) spans 364 to 379 (SDPSQQPPSYGGPSVP). Over residues 380 to 393 (GSGGPPAGGSGFGR) the composition is skewed to gly residues.

Interacts with DAZ and DAZL. Post-translationally, acetylation at Lys-150 is predominantly observed in the nuclear fraction, and may regulate nucleocytoplasmic transport. Mainly expressed in testis. Expressed to a lower level in thymus. Weakly or not expressed in heart, liver, brain, placenta, lung, skeletal muscle, kidney and pancreas.

The protein localises to the cytoplasm. The protein resides in the nucleus. Its function is as follows. RNA-binding protein, which may be required during spermatogenesis. This Homo sapiens (Human) protein is DAZ-associated protein 1 (DAZAP1).